The primary structure comprises 615 residues: Protein translocase subunit SecD (615 aa).

Helical transmembrane passes span 10-30 (YVML…NLFG), 452-472 (QGLE…IIFY), 477-497 (LIAT…MSLL), 504-524 (MPGI…NVLI), 548-570 (GAFS…LYAV), and 585-605 (GVAT…NLLY).

This sequence belongs to the SecD/SecF family. SecD subfamily. In terms of assembly, forms a complex with SecF. Part of the essential Sec protein translocation apparatus which comprises SecA, SecYEG and auxiliary proteins SecDF-YajC and YidC.

It localises to the cell inner membrane. Functionally, part of the Sec protein translocase complex. Interacts with the SecYEG preprotein conducting channel. SecDF uses the proton motive force (PMF) to complete protein translocation after the ATP-dependent function of SecA. The protein is Protein translocase subunit SecD of Shigella flexneri.